The sequence spans 466 residues: Cysteine--tRNA ligase (466 aa).

Residue cysteine 28 coordinates Zn(2+). Residues 30–40 (PTVYNYIHIGN) carry the 'HIGH' region motif. The Zn(2+) site is built by cysteine 208, histidine 233, and glutamate 237. Positions 265–269 (KMSKS) match the 'KMSKS' region motif. Lysine 268 is an ATP binding site.

The protein belongs to the class-I aminoacyl-tRNA synthetase family. Monomer. The cofactor is Zn(2+).

It is found in the cytoplasm. The catalysed reaction is tRNA(Cys) + L-cysteine + ATP = L-cysteinyl-tRNA(Cys) + AMP + diphosphate. This is Cysteine--tRNA ligase from Staphylococcus saprophyticus subsp. saprophyticus (strain ATCC 15305 / DSM 20229 / NCIMB 8711 / NCTC 7292 / S-41).